The primary structure comprises 381 residues: E3 ubiquitin-protein ligase ATL15 (381 aa).

The first 23 residues, 1–23 (MVVMSRVSFYSSFLLLLLEVVVA), serve as a signal peptide directing secretion. The helical transmembrane segment at 40-60 (AIIMIVLVSVFFALGCISVYM) threads the bilayer. The RING-type; atypical zinc-finger motif lies at 118–160 (CPVCLNEFEDDETLRLIPQCCHVFHPGCIDAWLRSQTTCPLCR).

It belongs to the RING-type zinc finger family. ATL subfamily.

The protein resides in the membrane. The enzyme catalyses S-ubiquitinyl-[E2 ubiquitin-conjugating enzyme]-L-cysteine + [acceptor protein]-L-lysine = [E2 ubiquitin-conjugating enzyme]-L-cysteine + N(6)-ubiquitinyl-[acceptor protein]-L-lysine.. It functions in the pathway protein modification; protein ubiquitination. Its function is as follows. E3 ubiquitin-protein ligase able to catalyze polyubiquitination with ubiquitin-conjugating enzyme E2 UBC8, UBC10, UBC11, UBC28 and UBC29 in vitro. The protein is E3 ubiquitin-protein ligase ATL15 (ATL15) of Arabidopsis thaliana (Mouse-ear cress).